The chain runs to 486 residues: Patatin-like phospholipase domain-containing protein 2 (486 aa).

Residues M1–W8 are Cytoplasmic-facing. A helical membrane pass occupies residues N9–L29. The 170-residue stretch at I10–K179 folds into the PNPLA domain. Residues G14–G19 carry the GXGXXG motif. Residues R30–H42 are Extracellular-facing. N-linked (GlcNAc...) asparagine glycosylation occurs at N39. The helical transmembrane segment at I43–G63 threads the bilayer. A GXSXG motif is present at residues G45–G49. S47 acts as the Nucleophile in catalysis. The Cytoplasmic portion of the chain corresponds to E64–E137. A Glycyl lysine isopeptide (Lys-Gly) (interchain with G-Cter in ubiquitin) cross-link involves residue K92. The helical transmembrane segment at L138–T158 threads the bilayer. Over L159–R331 the chain is Extracellular. Residue D166 is the Proton acceptor of the active site. The DGA/G motif lies at D166–G168. A helical transmembrane segment spans residues L332–I352. Topologically, residues R353–C486 are cytoplasmic. S374 bears the Phosphoserine; in vitro mark. 2 positions are modified to phosphoserine; by PKA: S396 and S406. Phosphoserine; in vitro is present on residues S430 and S468. Over residues A465–T476 the composition is skewed to low complexity. The segment at A465–C486 is disordered. Residues P477–C486 show a composition bias toward pro residues.

In terms of assembly, interacts with ABHD5; this association stimulates PNPLA2 triglyceride hydrolase activity. Interacts with SERPINF1; this interaction stimulates the phospholipase A2 activity of PNPLA2. Despite a colocalization in lipid droplets, it probably does not interact with PLIN. Interacts with PLIN5; prevents interaction with ABHD5. Interacts with FAF2. Post-translationally, phosphorylation at Ser-406 by PKA is increased during fasting and moderate intensity exercise, and moderately increases lipolytic activity. In terms of processing, ubiquitinated by PEX2 in response to reactive oxygen species (ROS), leading to its degradation. Ubiquitination is stimulated by LDAH. As to expression, expressed at high levels in white and brown adipose tissue, and to a lesser degree in testis and cardiac muscle. Barely detected in liver, spleen, thymus, kidney, skeletal muscle, and brain. Among the white adipose depots, gonadal fat showed the highest level of expression compared with inguinal and renal white adipose tissues.

It localises to the lipid droplet. Its subcellular location is the cell membrane. The protein localises to the cytoplasm. The enzyme catalyses a triacylglycerol + H2O = a diacylglycerol + a fatty acid + H(+). It catalyses the reaction a triacylglycerol + H2O = a 1,2-diacylglycerol + a fatty acid + H(+). The catalysed reaction is a triacylglycerol + H2O = a 1,3-diacylglycerol + a fatty acid + H(+). It carries out the reaction a triacyl-sn-glycerol + H2O = a 2,3-diacyl-sn-glycerol + a fatty acid + H(+). The enzyme catalyses a triacyl-sn-glycerol + H2O = a 1,3-diacyl-sn-glycerol + a fatty acid + H(+). It catalyses the reaction 1,2,3-tri-(9Z-octadecenoyl)-glycerol + H2O = 1,3-di-(9Z-octadecenoyl)-glycerol + (9Z)-octadecenoate + H(+). The catalysed reaction is 1,2,3-tri-(9Z)-hexadecenoylglycerol + H2O = 1,3-di-(9Z)-hexadecenoylglycerol + (9Z)-hexadecenoate + H(+). It carries out the reaction 1,2,3-tri-(9Z,12Z)-octadecadienoylglycerol + H2O = 1,3-di-(9Z,12Z)-octadecadienoylglycerol + (9Z,12Z)-octadecadienoate + H(+). The enzyme catalyses 1,2,3-tri-(9Z,12Z,15Z)-octadecatrienoylglycerol + H2O = 1,3-di-(9Z,12Z,15Z)-octadecatrienoylglycerol + (9Z,12Z,15Z)-octadecatrienoate + H(+). It catalyses the reaction 1,3-di-(9Z)-octadecenoyl-2-hexadecanoylglycerol + H2O = 1,3-di-(9Z-octadecenoyl)-glycerol + hexadecanoate + H(+). The catalysed reaction is 1,2-di-(9Z)-octadecenoyl-3-hexadecanoyl-sn-glycerol + H2O = 1-(9Z)-octadecenoyl-3-hexadecanoyl-sn-glycerol + (9Z)-octadecenoate + H(+). It carries out the reaction 1-hexadecanoyl-2,3-di-(9Z)-octadecenoyl-sn-glycerol + H2O = 1-hexadecanoyl-3-(9Z)-octadecenoyl-sn-glycerol + (9Z)-octadecenoate + H(+). The enzyme catalyses 1,2,3-tri-(9Z-octadecenoyl)-glycerol + H2O = 2,3-di-(9Z)-octadecenoyl-sn-glycerol + (9Z)-octadecenoate + H(+). It catalyses the reaction 1,2,3-tri-(9Z)-hexadecenoylglycerol + H2O = 2,3-di-(9Z)-hexadecenoyl-sn-glycerol + (9Z)-hexadecenoate + H(+). The catalysed reaction is 1,2,3-tri-(9Z,12Z)-octadecadienoylglycerol + H2O = 2,3-di-(9Z,12Z)-octadecadienoyl-sn-glycerol + (9Z,12Z)-octadecadienoate + H(+). It carries out the reaction 1,2,3-tri-(9Z,12Z,15Z)-octadecatrienoylglycerol + H2O = 2,3-di-(9Z,12Z,15Z)-octadecatrienoyl-sn-glycerol + (9Z,12Z,15Z)-octadecatrienoate + H(+). The enzyme catalyses 1,3-di-(9Z)-octadecenoyl-2-hexadecanoylglycerol + H2O = 2-hexadecanoyl-3-(9Z)-octadecenoyl-sn-glycerol + (9Z)-octadecenoate + H(+). It catalyses the reaction 1-hexadecanoyl-2,3-di-(9Z)-octadecenoyl-sn-glycerol + H2O = 2,3-di-(9Z)-octadecenoyl-sn-glycerol + hexadecanoate + H(+). The catalysed reaction is 1,2-di-(9Z)-octadecenoyl-3-hexadecanoyl-sn-glycerol + H2O = 2-(9Z-octadecenoyl)-3-hexadecanoyl-sn-glycerol + (9Z)-octadecenoate + H(+). It carries out the reaction 1,2-di-(9Z-octadecenoyl)-glycerol + (9Z)-octadecenoate + H(+) = 1,2,3-tri-(9Z-octadecenoyl)-glycerol + H2O. The enzyme catalyses a 1-acylglycerol + a 1,3-diacylglycerol = a triacylglycerol + glycerol. It catalyses the reaction a 1-acylglycerol + a 1,2-diacylglycerol = a triacylglycerol + glycerol. The catalysed reaction is 2 a 1-acylglycerol = a 1,2-diacylglycerol + glycerol. It carries out the reaction a triacylglycerol + all-trans-retinol = an all-trans-retinyl ester + a diacylglycerol. The enzyme catalyses 1-(9Z-octadecenoyl)-glycerol + 1,3-di-(9Z-octadecenoyl)-glycerol = 1,2,3-tri-(9Z-octadecenoyl)-glycerol + glycerol. It catalyses the reaction 1-(9Z-octadecenoyl)-glycerol + 1,2-di-(9Z-octadecenoyl)-glycerol = 1,2,3-tri-(9Z-octadecenoyl)-glycerol + glycerol. The catalysed reaction is 2 1-(9Z-octadecenoyl)-glycerol = 1,2-di-(9Z-octadecenoyl)-glycerol + glycerol. It carries out the reaction 1,2,3-tri-(9Z-octadecenoyl)-glycerol + all-trans-retinol = all-trans-retinyl 9Z-octadecenoate + di-(9Z)-octadecenoylglycerol. The enzyme catalyses a 1,2-diacyl-sn-glycero-3-phosphocholine + H2O = a 1-acyl-sn-glycero-3-phosphocholine + a fatty acid + H(+). It catalyses the reaction 1,2,3-tri-(9Z-octadecenoyl)-glycerol + 9-hydroxy-octadecanoate = 9-(9Z-octadecenoyloxy)-octadecanoate + 2,3-di-(9Z)-octadecenoyl-sn-glycerol. The catalysed reaction is 1-hexadecanoyl-2,3-di-(9Z)-octadecenoyl-sn-glycerol + 9-hydroxy-octadecanoate = 9-hexadecanoyloxy-octadecanoate + 2,3-di-(9Z)-octadecenoyl-sn-glycerol. It carries out the reaction 1,2,3-tri-(10Z)-heptadecenoylglycerol + 9-hydroxy-octadecanoate = 2,3-di-(10Z-heptadecenoyl)-sn-glycerol + 9-(10Z-heptadecenoyloxy)-octadecanoate. The enzyme catalyses 1,2,3-tri-(9Z,12Z)-octadecadienoylglycerol + 9-hydroxy-octadecanoate = 2,3-di-(9Z,12Z)-octadecadienoyl-sn-glycerol + 9-(9Z,12Z-octadecadienoyloxy)-octadecanoate. It catalyses the reaction 1,2,3-tri-(9Z)-hexadecenoylglycerol + 9-hydroxy-octadecanoate = 2,3-di-(9Z)-hexadecenoyl-sn-glycerol + 9-(9Z-hexadecenoyloxy)-octadecanoate. The catalysed reaction is 9-hydroxy-octadecanoate + 1,2-di-(9Z-octadecenoyl)-sn-glycerol = 9-(9Z-octadecenoyloxy)-octadecanoate + 2-(9Z-octadecenoyl)-glycerol. It carries out the reaction 1-hexadecanoyl-2,3-di-(9Z)-octadecenoyl-sn-glycerol + 9-hydroxy-octadecanoate = 1-hexadecanoyl-3-(9Z)-octadecenoyl-sn-glycerol + 9-(9Z-octadecenoyloxy)-octadecanoate. Its pathway is glycerolipid metabolism; triacylglycerol degradation. Its activity is regulated as follows. Stimulated by PKA-dependent PLIN phosphorylation. Catalyzes the initial step in triglyceride hydrolysis in adipocyte and non-adipocyte lipid droplets. Exhibits a strong preference for the hydrolysis of long-chain fatty acid esters at the sn-2 position of the glycerol backbone and acts coordinately with LIPE/HLS and DGAT2 within the lipolytic cascade. Also possesses acylglycerol transacylase and phospholipase A2 activities. Transfers fatty acid from triglyceride to retinol, hydrolyzes retinylesters, and generates 1,3-diacylglycerol from triglycerides. Regulates adiposome size and may be involved in the degradation of adiposomes. Catalyzes the formation of an ester bond between hydroxy fatty acids and fatty acids derived from triglycerides or diglycerides to generate fatty acid esters of hydroxy fatty acids (FAHFAs) in adipocytes. Acts antagonistically with LDAH in regulation of cellular lipid stores. Inhibits LDAH-stimulated lipid droplet fusion. May play an important role in energy homeostasis. May play a role in the response of the organism to starvation, enhancing hydrolysis of triglycerides and providing free fatty acids to other tissues to be oxidized in situations of energy depletion. In Mus musculus (Mouse), this protein is Patatin-like phospholipase domain-containing protein 2.